A 360-amino-acid polypeptide reads, in one-letter code: Phospho-N-acetylmuramoyl-pentapeptide-transferase (360 aa).

A run of 10 helical transmembrane segments spans residues 18-38, 73-93, 97-117, 134-154, 168-188, 199-219, 236-256, 263-283, 288-308, and 338-358; these read VFSYVTFRAILGLLTALVFSL, TMGGLLILAGIFVSVLLWGDL, YVLVMLFVLGSFGTIGFIDDY, YILQSLAALVVAVFLYSSSTL, VMPQLGLVFIVLAYFTIVGAS, GLAIMPTVMVAGAFALIAYLS, AGELVIVCTAIVGAGLGFLWF, VFMGDVGSLALGAALGAIAVL, ILLVIMGGVFVMETVSVILQV, and VIVRFWIISLFLVLLGLATLK.

Belongs to the glycosyltransferase 4 family. MraY subfamily. The cofactor is Mg(2+).

It is found in the cell inner membrane. The enzyme catalyses UDP-N-acetyl-alpha-D-muramoyl-L-alanyl-gamma-D-glutamyl-meso-2,6-diaminopimeloyl-D-alanyl-D-alanine + di-trans,octa-cis-undecaprenyl phosphate = di-trans,octa-cis-undecaprenyl diphospho-N-acetyl-alpha-D-muramoyl-L-alanyl-D-glutamyl-meso-2,6-diaminopimeloyl-D-alanyl-D-alanine + UMP. It functions in the pathway cell wall biogenesis; peptidoglycan biosynthesis. Its function is as follows. Catalyzes the initial step of the lipid cycle reactions in the biosynthesis of the cell wall peptidoglycan: transfers peptidoglycan precursor phospho-MurNAc-pentapeptide from UDP-MurNAc-pentapeptide onto the lipid carrier undecaprenyl phosphate, yielding undecaprenyl-pyrophosphoryl-MurNAc-pentapeptide, known as lipid I. This Shewanella denitrificans (strain OS217 / ATCC BAA-1090 / DSM 15013) protein is Phospho-N-acetylmuramoyl-pentapeptide-transferase.